A 493-amino-acid chain; its full sequence is Glutamate--tRNA ligase (493 aa).

The 'HIGH' region signature appears at 10–20 (PSPTGDPHVGT). The 'KMSKS' region signature appears at 251-255 (KLSKR). Lysine 254 contributes to the ATP binding site.

This sequence belongs to the class-I aminoacyl-tRNA synthetase family. Glutamate--tRNA ligase type 1 subfamily. In terms of assembly, monomer.

It localises to the cytoplasm. The enzyme catalyses tRNA(Glu) + L-glutamate + ATP = L-glutamyl-tRNA(Glu) + AMP + diphosphate. In terms of biological role, catalyzes the attachment of glutamate to tRNA(Glu) in a two-step reaction: glutamate is first activated by ATP to form Glu-AMP and then transferred to the acceptor end of tRNA(Glu). The chain is Glutamate--tRNA ligase from Pseudomonas entomophila (strain L48).